Reading from the N-terminus, the 21-residue chain is Capsid vertex protein gp24 (21 aa).

Positions 1 to 21 (MAKINELLRESTTTNSNSIGR) are disordered. Polar residues predominate over residues 10 to 21 (ESTTTNSNSIGR).

It belongs to the T4 phage capsid protein family. As to quaternary structure, homopentamer. A total of 55 subunits of gp24 forms the 11 pentamers. Interacts with portal protein gp20. Interacts with gp23 that forms 160 hexamers. Post-translationally, proteolytic cleavage give rise to gp24*.

It is found in the virion. Its function is as follows. Capsid protein that self-associates to form 11 pentons, building the T=13 laevo capsid in association with 160 hexamers of gp23* and one dodecamer of gp20. This Escherichia coli (Bacteriophage T6) protein is Capsid vertex protein gp24.